The following is a 255-amino-acid chain: Type III pantothenate kinase (255 aa).

Residue 7–14 (DVGNTRLK) coordinates ATP. Substrate contacts are provided by residues Tyr96 and 103 to 106 (GADR). Catalysis depends on Asp105, which acts as the Proton acceptor. Thr133 serves as a coordination point for ATP. Thr183 is a substrate binding site.

It belongs to the type III pantothenate kinase family. As to quaternary structure, homodimer. It depends on NH4(+) as a cofactor. The cofactor is K(+).

Its subcellular location is the cytoplasm. It carries out the reaction (R)-pantothenate + ATP = (R)-4'-phosphopantothenate + ADP + H(+). It functions in the pathway cofactor biosynthesis; coenzyme A biosynthesis; CoA from (R)-pantothenate: step 1/5. In terms of biological role, catalyzes the phosphorylation of pantothenate (Pan), the first step in CoA biosynthesis. In Albidiferax ferrireducens (strain ATCC BAA-621 / DSM 15236 / T118) (Rhodoferax ferrireducens), this protein is Type III pantothenate kinase.